A 775-amino-acid chain; its full sequence is RNA-directed RNA polymerase (775 aa).

The RdRp catalytic domain occupies 473 to 586 (TCAIGFDMKR…FFEADEVDRV (114 aa)).

It carries out the reaction RNA(n) + a ribonucleoside 5'-triphosphate = RNA(n+1) + diphosphate. In terms of biological role, RNA-dependent RNA polymerase that plays an essential role in the virus replication. In Brassica napus subsp. rapifera (Purple mistress), this protein is RNA-directed RNA polymerase.